The primary structure comprises 368 residues: Protein mab-21-like 3 (368 aa).

Belongs to the mab-21 family.

The protein is Protein mab-21-like 3 (mab21L3) of Xenopus laevis (African clawed frog).